Reading from the N-terminus, the 435-residue chain is T-box transcription factor T (435 aa).

The segment at residues 51–219 (LWLRFKELTN…YNPFAKAFLD (169 aa)) is a DNA-binding region (T-box). The tract at residues 279-308 (YPTLRSHRSSPYPSPYAHRNNSPTYSDNSP) is disordered. Residues 297 to 308 (RNNSPTYSDNSP) show a composition bias toward polar residues.

As to quaternary structure, monomer. In terms of tissue distribution, detected in testis, but not in other, normal tissues. Detected in lung tumors (at protein level).

It is found in the nucleus. In terms of biological role, involved in the transcriptional regulation of genes required for mesoderm formation and differentiation. Binds to a palindromic T site 5'-TTCACACCTAGGTGTGAA-3' DNA sequence and activates gene transcription when bound to such a site. This chain is T-box transcription factor T, found in Homo sapiens (Human).